Here is a 257-residue protein sequence, read N- to C-terminus: General L-amino acid transport ATP-binding protein AapP (257 aa).

The region spanning 18-252 is the ABC transporter domain; sequence VEIVNMNKWY…PQHERTKLFL (235 aa). 50–57 contacts ATP; sequence GPSGSGKS.

It belongs to the ABC transporter superfamily.

Its function is as follows. Part of a binding-protein-dependent transport system for L-amino acids, affects the uptake as well as the efflux of these amino acids. Probably responsible for energy coupling to the transport system. The protein is General L-amino acid transport ATP-binding protein AapP (aapP) of Rhizobium johnstonii (strain DSM 114642 / LMG 32736 / 3841) (Rhizobium leguminosarum bv. viciae).